Reading from the N-terminus, the 298-residue chain is Nucleoid occlusion protein (298 aa).

A DNA-binding region (H-T-H motif) is located at residues 152–171; that stretch reads EALAQRLGKGQSTVANKLRL.

It belongs to the ParB family.

It is found in the cytoplasm. It localises to the nucleoid. Its function is as follows. Effects nucleoid occlusion by binding relatively nonspecifically to DNA and preventing the assembly of the division machinery in the vicinity of the nucleoid, especially under conditions that disturb the cell cycle. It helps to coordinate cell division and chromosome segregation by preventing the formation of the Z ring through the nucleoid, which would cause chromosome breakage. This Lysinibacillus sphaericus (strain C3-41) protein is Nucleoid occlusion protein.